Reading from the N-terminus, the 113-residue chain is U-scoloptoxin(16)-Sa1a (113 aa).

A signal peptide spans 1–29; sequence MAPPSNPLFVVLCWALFAYLMLVLRDIQA.

It belongs to the scoloptoxin-16 family. Contains 4 disulfide bonds. As to expression, expressed by the venom gland.

Its subcellular location is the secreted. The protein is U-scoloptoxin(16)-Sa1a of Scolopendra alternans (Florida Keys giant centipede).